The sequence spans 594 residues: Elongation factor 4 (594 aa).

The tr-type G domain maps to 2-184 (KNIRNFSIIA…TIVAKVPAPE (183 aa)). GTP-binding positions include 14 to 19 (DHGKST) and 131 to 134 (NKID).

It belongs to the TRAFAC class translation factor GTPase superfamily. Classic translation factor GTPase family. LepA subfamily.

Its subcellular location is the cell inner membrane. The catalysed reaction is GTP + H2O = GDP + phosphate + H(+). Functionally, required for accurate and efficient protein synthesis under certain stress conditions. May act as a fidelity factor of the translation reaction, by catalyzing a one-codon backward translocation of tRNAs on improperly translocated ribosomes. Back-translocation proceeds from a post-translocation (POST) complex to a pre-translocation (PRE) complex, thus giving elongation factor G a second chance to translocate the tRNAs correctly. Binds to ribosomes in a GTP-dependent manner. This chain is Elongation factor 4, found in Francisella tularensis subsp. novicida (strain U112).